Reading from the N-terminus, the 375-residue chain is 23S rRNA (uracil(747)-C(5))-methyltransferase RlmC (375 aa).

[4Fe-4S] cluster is bound by residues cysteine 3, cysteine 11, cysteine 14, and cysteine 87. Residues glutamine 212, phenylalanine 241, glutamate 262, and asparagine 307 each coordinate S-adenosyl-L-methionine. Residue cysteine 334 is the Nucleophile of the active site.

The protein belongs to the class I-like SAM-binding methyltransferase superfamily. RNA M5U methyltransferase family. RlmC subfamily.

The catalysed reaction is uridine(747) in 23S rRNA + S-adenosyl-L-methionine = 5-methyluridine(747) in 23S rRNA + S-adenosyl-L-homocysteine + H(+). Functionally, catalyzes the formation of 5-methyl-uridine at position 747 (m5U747) in 23S rRNA. In Escherichia coli O45:K1 (strain S88 / ExPEC), this protein is 23S rRNA (uracil(747)-C(5))-methyltransferase RlmC.